A 361-amino-acid chain; its full sequence is MAGNSIGQFFRVTTFGESHGIALGCIIDGVPPGIPITEADIQLDLDRRRPGTSRYTTQRREPDQVRILSGIFEGVTTGTSIGLMIENTDQRSQDYSAIKDVFRPGHADYTYEQKYGVRDYRGGGRSSARETAMRVAAGAIAKKYLAQKFGVQVRGYLAQIGDISCDVVDWDQVEQNPFFCPDASKLESLDALMRELKKAGDSIGAKITVVAEHVPVGLGEPVFDRLDADLAHALMSINAVKGVEIGDGFAVVTKRGSENRDEITPQGFQSNHAGGILGGISSGQPVVAHIALKPTSSITVPGQTINRQGEAVEMITRGRHDPCVGIRAVPIAEAMMAIVLMDHLLRQRAQCGDVVSDVPRW.

NADP(+)-binding residues include arginine 48 and arginine 54. FMN is bound by residues 125 to 127 (RSS), 238 to 239 (NA), glycine 278, 293 to 297 (KPTSS), and arginine 319.

Belongs to the chorismate synthase family. In terms of assembly, homotetramer. Requires FMNH2 as cofactor.

The enzyme catalyses 5-O-(1-carboxyvinyl)-3-phosphoshikimate = chorismate + phosphate. It participates in metabolic intermediate biosynthesis; chorismate biosynthesis; chorismate from D-erythrose 4-phosphate and phosphoenolpyruvate: step 7/7. In terms of biological role, catalyzes the anti-1,4-elimination of the C-3 phosphate and the C-6 proR hydrogen from 5-enolpyruvylshikimate-3-phosphate (EPSP) to yield chorismate, which is the branch point compound that serves as the starting substrate for the three terminal pathways of aromatic amino acid biosynthesis. This reaction introduces a second double bond into the aromatic ring system. This Yersinia enterocolitica serotype O:8 / biotype 1B (strain NCTC 13174 / 8081) protein is Chorismate synthase.